The sequence spans 731 residues: 1,4-alpha-glucan branching enzyme GlgB (731 aa).

Residue D412 is the Nucleophile of the active site. The active-site Proton donor is E465.

This sequence belongs to the glycosyl hydrolase 13 family. GlgB subfamily. Monomer.

It carries out the reaction Transfers a segment of a (1-&gt;4)-alpha-D-glucan chain to a primary hydroxy group in a similar glucan chain.. Its pathway is glycan biosynthesis; glycogen biosynthesis. Functionally, catalyzes the formation of the alpha-1,6-glucosidic linkages in glycogen by scission of a 1,4-alpha-linked oligosaccharide from growing alpha-1,4-glucan chains and the subsequent attachment of the oligosaccharide to the alpha-1,6 position. In Bordetella parapertussis (strain 12822 / ATCC BAA-587 / NCTC 13253), this protein is 1,4-alpha-glucan branching enzyme GlgB.